Consider the following 644-residue polypeptide: Phosphatidylinositol polyphosphate 5-phosphatase type IV (644 aa).

The interval 1–193 (MPSKAENLRP…RLPSLLPPRP (193 aa)) is disordered. 8 consecutive repeat copies span residues 10–13 (PSEP), 15–18 (PQPP), 28–31 (PGAP), 39–42 (PPDV), 55–58 (PATP), 69–71 (PIA), 72–74 (PRP), and 75–78 (PARP). Residues 10 to 242 (PSEPAPQPPE…SLGPGRPRSP (233 aa)) are 13 X 4 AA repeats of P-X-X-P. Positions 78–90 (PRLERALSLDDKG) are enriched in basic and acidic residues. S99 carries the post-translational modification Phosphoserine. The segment covering 107–118 (NGTSPSRGSVQS) has biased composition (polar residues). Residues 121-124 (PGAP) form repeat 9. The span at 152–163 (GSPSSGGNPLSG) shows a compositional bias: low complexity. 4 repeat units span residues 169–172 (PNLP), 183–185 (PRL), 190–193 (PPRP), and 236–239 (PGRP). S241 and S256 each carry phosphoserine. C641 bears the Cysteine methyl ester mark. C641 carries the S-farnesyl cysteine lipid modification. Residues 642 to 644 (SVS) constitute a propeptide, removed in mature form.

It belongs to the inositol polyphosphate 5-phosphatase family. Interacts (when prenylated) with PDE6D; this is important for normal location in cilia.

The protein resides in the cytoplasm. Its subcellular location is the cytoskeleton. The protein localises to the cilium axoneme. It is found in the golgi apparatus. It localises to the golgi stack membrane. The protein resides in the cell membrane. Its subcellular location is the cell projection. The protein localises to the ruffle. It is found in the nucleus. The enzyme catalyses a 1,2-diacyl-sn-glycero-3-phospho-(1D-myo-inositol-4,5-bisphosphate) + H2O = a 1,2-diacyl-sn-glycero-3-phospho-(1D-myo-inositol 4-phosphate) + phosphate. It catalyses the reaction a 1,2-diacyl-sn-glycero-3-phospho-(1D-myo-inositol-3,4,5-trisphosphate) + H2O = a 1,2-diacyl-sn-glycero-3-phospho-(1D-myo-inositol-3,4-bisphosphate) + phosphate. The catalysed reaction is a 1,2-diacyl-sn-glycero-3-phospho-(1D-myo-inositol-3,5-bisphosphate) + H2O = a 1,2-diacyl-sn-glycero-3-phospho-(1D-myo-inositol-3-phosphate) + phosphate. In terms of biological role, phosphatidylinositol (PtdIns) phosphatase that specifically hydrolyzes the 5-phosphate of phosphatidylinositol-3,4,5-trisphosphate (PtdIns(3,4,5)P3), phosphatidylinositol 4,5-bisphosphate(PtdIns(4,5)P2) and phosphatidylinositol 3,5-bisphosphate (PtdIns(3,5)P2). Specific for lipid substrates, inactive towards water soluble inositol phosphates. Plays an essential role in the primary cilium by controlling ciliary growth and phosphoinositide 3-kinase (PI3K) signaling and stability. This is Phosphatidylinositol polyphosphate 5-phosphatase type IV (INPP5E) from Pan troglodytes (Chimpanzee).